The primary structure comprises 356 residues: MAAPISLKWEEHSLHENKFVRDEDERPKVPYNTFSNEIPVISLAGIDGCRRAEICDEIVKACEDWGIFQVVDHGVDTKLLSDMTGLARDFFHLPTQEKLRFDMTGGKKGGFIVSSHLQGEAVQDWREIVTYFSYPIKARDYSRWPDKPNEWRAVTEEYSKVLMGLACKLLEVLSEAMGLEKEALTKACVDMDQKVVVNYYPKCPQPDLTLGLKRHTDPGTITLLLQDQVGGLQATRDGGESWITVKPVEGAFVVNLGDHGHYLSNGRFKNADHQAVVNSSTSRLSIATFQNPAPEAIVYPLKINEGEKSIMEEPMTFMEMYKKKMSTDLELARLKKLAKDKQQDLEVVKPIQNIFA.

Positions 188-292 constitute a Fe2OG dioxygenase domain; sequence CVDMDQKVVV…RLSIATFQNP (105 aa). The Fe cation site is built by His215, Asp217, and His273. A 2-oxoglutarate-binding site is contributed by Arg283.

Belongs to the iron/ascorbate-dependent oxidoreductase family. Fe(2+) is required as a cofactor. Requires L-ascorbate as cofactor.

It catalyses the reaction a (2S)-flavan-4-one + 2-oxoglutarate + O2 = a (2R,3R)-dihydroflavonol + succinate + CO2. It participates in secondary metabolite biosynthesis; flavonoid biosynthesis. In terms of biological role, catalyzes the 3-beta-hydroxylation of 2S-flavanones to 2R,3R-dihydroflavonols which are intermediates in the biosynthesis of flavonols, anthocyanidins, catechins and proanthocyanidins in plants. The protein is Naringenin,2-oxoglutarate 3-dioxygenase (FHT) of Callistephus chinensis (China aster).